The primary structure comprises 1296 residues: DNA-directed RNA polymerase subunit beta' (1296 aa).

Cysteine 60, cysteine 62, cysteine 75, and cysteine 78 together coordinate Zn(2+). The segment at 188 to 209 (GAKGDARRKVRESAEREMRQIR) is disordered. Mg(2+) contacts are provided by aspartate 535, aspartate 537, and aspartate 539. The Zn(2+) site is built by cysteine 877, cysteine 954, cysteine 961, and cysteine 964.

This sequence belongs to the RNA polymerase beta' chain family. The RNAP catalytic core consists of 2 alpha, 1 beta, 1 beta' and 1 omega subunit. When a sigma factor is associated with the core the holoenzyme is formed, which can initiate transcription. Requires Mg(2+) as cofactor. Zn(2+) is required as a cofactor.

It carries out the reaction RNA(n) + a ribonucleoside 5'-triphosphate = RNA(n+1) + diphosphate. DNA-dependent RNA polymerase catalyzes the transcription of DNA into RNA using the four ribonucleoside triphosphates as substrates. The sequence is that of DNA-directed RNA polymerase subunit beta' from Parafrankia sp. (strain EAN1pec).